We begin with the raw amino-acid sequence, 286 residues long: UDP-3-O-acyl-N-acetylglucosamine deacetylase (286 aa).

Residues His-81, His-240, and Asp-244 each coordinate Zn(2+). His-266 serves as the catalytic Proton donor.

This sequence belongs to the LpxC family. Zn(2+) serves as cofactor.

It carries out the reaction a UDP-3-O-[(3R)-3-hydroxyacyl]-N-acetyl-alpha-D-glucosamine + H2O = a UDP-3-O-[(3R)-3-hydroxyacyl]-alpha-D-glucosamine + acetate. It participates in glycolipid biosynthesis; lipid IV(A) biosynthesis; lipid IV(A) from (3R)-3-hydroxytetradecanoyl-[acyl-carrier-protein] and UDP-N-acetyl-alpha-D-glucosamine: step 2/6. In terms of biological role, catalyzes the hydrolysis of UDP-3-O-myristoyl-N-acetylglucosamine to form UDP-3-O-myristoylglucosamine and acetate, the committed step in lipid A biosynthesis. This is UDP-3-O-acyl-N-acetylglucosamine deacetylase from Francisella tularensis subsp. tularensis (strain FSC 198).